The primary structure comprises 3092 residues: Inhibitory regulator protein IRA1 (3092 aa).

2 disordered regions span residues 375 to 430 (HLHH…MASL) and 450 to 487 (LGQA…NSAN). The segment covering 379–400 (SSSSSKTTNTNSPNSISKTSIK) has biased composition (low complexity). A compositionally biased stretch (polar residues) spans 401–430 (QSSVNASGNVSPSQFSTGNDASPTSPMASL). Over residues 455–487 (TSTSTTAATTKTDADTPSTMNTNNNNNNNNSAN) the composition is skewed to low complexity. Phosphoserine is present on residues Ser-497 and Ser-915. Disordered regions lie at residues 946-988 (SGVP…VLSS) and 1003-1023 (TILK…ADDK). The segment covering 965–988 (QSPYSSPPQLQQSDLPSPLSVLSS) has biased composition (low complexity). Ser-1342 carries the phosphoserine modification. Residues 1725-1930 (NASHILVTEL…DKIFNFLSEL (206 aa)) form the Ras-GAP domain. 2 positions are modified to phosphoserine; by PKA: Ser-1753 and Ser-3004.

The protein localises to the cytoplasm. In terms of biological role, inhibitory regulator of the Ras-cyclic AMP pathway in S.cerevisiae. Stimulates the GTPase activity of Ras proteins. The protein is Inhibitory regulator protein IRA1 (IRA1) of Saccharomyces cerevisiae (strain ATCC 204508 / S288c) (Baker's yeast).